A 431-amino-acid chain; its full sequence is 3-phosphoshikimate 1-carboxyvinyltransferase (431 aa).

3 residues coordinate 3-phosphoshikimate: K21, S22, and R26. Residue K21 coordinates phosphoenolpyruvate. Residues G93 and R122 each contribute to the phosphoenolpyruvate site. The 3-phosphoshikimate site is built by S167, Q169, D318, and K345. Residue Q169 coordinates phosphoenolpyruvate. D318 (proton acceptor) is an active-site residue. 2 residues coordinate phosphoenolpyruvate: R349 and R391.

Belongs to the EPSP synthase family. In terms of assembly, monomer.

The protein resides in the cytoplasm. The catalysed reaction is 3-phosphoshikimate + phosphoenolpyruvate = 5-O-(1-carboxyvinyl)-3-phosphoshikimate + phosphate. The protein operates within metabolic intermediate biosynthesis; chorismate biosynthesis; chorismate from D-erythrose 4-phosphate and phosphoenolpyruvate: step 6/7. In terms of biological role, catalyzes the transfer of the enolpyruvyl moiety of phosphoenolpyruvate (PEP) to the 5-hydroxyl of shikimate-3-phosphate (S3P) to produce enolpyruvyl shikimate-3-phosphate and inorganic phosphate. The polypeptide is 3-phosphoshikimate 1-carboxyvinyltransferase (Roseiflexus castenholzii (strain DSM 13941 / HLO8)).